Here is a 639-residue protein sequence, read N- to C-terminus: tRNA uridine 5-carboxymethylaminomethyl modification enzyme MnmG (639 aa).

15–20 contributes to the FAD binding site; sequence GAGHAG. 276-290 contacts NAD(+); that stretch reads GPRYCPSIEDKIVRF.

It belongs to the MnmG family. In terms of assembly, homodimer. Heterotetramer of two MnmE and two MnmG subunits. It depends on FAD as a cofactor.

It localises to the cytoplasm. NAD-binding protein involved in the addition of a carboxymethylaminomethyl (cmnm) group at the wobble position (U34) of certain tRNAs, forming tRNA-cmnm(5)s(2)U34. The polypeptide is tRNA uridine 5-carboxymethylaminomethyl modification enzyme MnmG (Streptococcus gordonii (strain Challis / ATCC 35105 / BCRC 15272 / CH1 / DL1 / V288)).